Consider the following 320-residue polypeptide: Glutaconate CoA-transferase subunit A (320 aa).

Belongs to the 3-oxoacid CoA-transferase subunit A family. Heterooctamer of four A and four B subunits.

It is found in the cytoplasm. It carries out the reaction trans-glutaconate + acetyl-CoA = (2E)-glutaconyl-CoA + acetate. Its pathway is amino-acid degradation; L-glutamate degradation via hydroxyglutarate pathway; crotonoyl-CoA from L-glutamate: step 3/5. Catalyzes the transfer of the CoA moiety from acetyl-CoA to (R)-2-hydroxyglutarate and related compounds like glutaconate. The sequence is that of Glutaconate CoA-transferase subunit A (gctA) from Acidaminococcus fermentans (strain ATCC 25085 / DSM 20731 / CCUG 9996 / CIP 106432 / VR4).